A 495-amino-acid chain; its full sequence is Putative myristoylated membrane protein 458R (495 aa).

The N-myristoyl glycine; by host moiety is linked to residue glycine 2. Residues asparagine 58, asparagine 71, asparagine 72, asparagine 103, and asparagine 111 are each glycosylated (N-linked (GlcNAc...) asparagine; by host). Residues 150 to 182 (HLKEIHKIITKEVENAKNNNKDVTKLIEQFSQA) are a coiled coil. The next 2 helical transmembrane spans lie at 194–214 (ILSL…YVGG) and 216–236 (IAFP…FNWT). Asparagine 262, asparagine 314, asparagine 317, asparagine 349, and asparagine 457 each carry an N-linked (GlcNAc...) asparagine; by host glycan. The chain crosses the membrane as a helical span at residues 469–489 (LWLLCVAVILLFIGIIGMGLG).

This sequence belongs to the IIV-6 118L/458R family.

It localises to the membrane. The sequence is that of Putative myristoylated membrane protein 458R from Acheta domesticus (House cricket).